Consider the following 1024-residue polypeptide: Translation initiation factor IF-2 (1024 aa).

The tract at residues serine 33–lysine 425 is disordered. Basic and acidic residues-rich tracts occupy residues glutamate 43–valine 62, threonine 135–proline 148, threonine 167–serine 198, and serine 223–arginine 263. Residues glutamate 316–glutamine 325 are compositionally biased toward polar residues. The span at lysine 332–arginine 350 shows a compositional bias: basic and acidic residues. The segment covering arginine 365–glycine 375 has biased composition (basic residues). Residues serine 394 to arginine 406 are compositionally biased toward basic and acidic residues. Residues serine 407–threonine 423 are compositionally biased toward basic residues. In terms of domain architecture, tr-type G spans serine 518–lysine 687. Positions glycine 527–threonine 534 are G1. Glycine 527 to threonine 534 serves as a coordination point for GTP. Residues glycine 552–histidine 556 form a G2 region. The interval aspartate 573 to glycine 576 is G3. GTP is bound by residues aspartate 573–histidine 577 and asparagine 627–aspartate 630. Positions asparagine 627 to aspartate 630 are G4. Residues serine 663–lysine 665 are G5.

This sequence belongs to the TRAFAC class translation factor GTPase superfamily. Classic translation factor GTPase family. IF-2 subfamily.

It is found in the cytoplasm. Functionally, one of the essential components for the initiation of protein synthesis. Protects formylmethionyl-tRNA from spontaneous hydrolysis and promotes its binding to the 30S ribosomal subunits. Also involved in the hydrolysis of GTP during the formation of the 70S ribosomal complex. The protein is Translation initiation factor IF-2 of Desulforapulum autotrophicum (strain ATCC 43914 / DSM 3382 / VKM B-1955 / HRM2) (Desulfobacterium autotrophicum).